Here is a 1123-residue protein sequence, read N- to C-terminus: Eukaryotic translation initiation factor 2-alpha kinase PK4 (1123 aa).

The tract at residues 1 to 30 (MKKRIRSSYKVGSSNKYHKKNYTDNEKDKK) is disordered. Positions 21–30 (NYTDNEKDKK) are enriched in basic and acidic residues. Residues 245–253 (IGQGGFGSV) and K270 contribute to the ATP site. Disordered regions lie at residues 409 to 493 (FYSD…NDEG), 572 to 609 (RNED…NELD), and 742 to 800 (ENDD…DDDI). Residues 419–428 (KNKENPEKNH) are compositionally biased toward basic and acidic residues. The span at 455–477 (HKLKKRKNKKKKSKKKRKSKSKI) shows a compositional bias: basic residues. 5 consecutive repeat copies span residues 576-582 (DKNGLDG), 583-589 (DKNGLDG), 590-596 (DKNGLDG), 597-603 (DKNGLDG), and 604-610 (DKNELDD). The segment at 576–610 (DKNGLDGDKNGLDGDKNGLDGDKNGLDGDKNELDD) is 5 X 7 AA tandem repeat of D-K-N-[GE]-L-D-[GD]. One can recognise a Protein kinase domain in the interval 678–1049 (TNVESINTNG…KIKVLLDPHL (372 aa)). The segment covering 743–754 (NDDDDDDDDDDN) has biased composition (acidic residues). The active-site Proton acceptor is D886. At T953 the chain carries Phosphothreonine.

Belongs to the protein kinase superfamily. Ser/Thr protein kinase family. GCN2 subfamily. May form oligomers in response to stress; oligomerization may result in catalytic activity. Interacts with BIP; the interaction is disrupted in response to stress. Auto-phosphorylated.

It localises to the endoplasmic reticulum membrane. It catalyses the reaction L-seryl-[protein] + ATP = O-phospho-L-seryl-[protein] + ADP + H(+). The catalysed reaction is L-threonyl-[protein] + ATP = O-phospho-L-threonyl-[protein] + ADP + H(+). Dissociation from BIP and oligomerization, may results autophosphorylation and kinase activity induction. Functionally, during the asexual blood stage, phosphorylates translation factor eIF2alpha in late schizonts resulting in protein translation inhibition. Plays a role in trophozoite differentiation into schizonts. The chain is Eukaryotic translation initiation factor 2-alpha kinase PK4 from Plasmodium falciparum.